The sequence spans 808 residues: Phenylalanine--tRNA ligase beta subunit (808 aa).

Residues 40–149 (RPELDFVKIV…DQAEVGKTIR (110 aa)) form the tRNA-binding domain. The B5 domain maps to 407-484 (HKEVRIHTDI…RTKGYDTIQV (78 aa)). 4 residues coordinate Mg(2+): aspartate 462, aspartate 468, glutamate 471, and glutamate 472. In terms of domain architecture, FDX-ACB spans 716 to 808 (SQFPEAEIDL…LAGKNGFVLR (93 aa)).

It belongs to the phenylalanyl-tRNA synthetase beta subunit family. Type 1 subfamily. Tetramer of two alpha and two beta subunits. Mg(2+) serves as cofactor.

The protein localises to the cytoplasm. It carries out the reaction tRNA(Phe) + L-phenylalanine + ATP = L-phenylalanyl-tRNA(Phe) + AMP + diphosphate + H(+). This is Phenylalanine--tRNA ligase beta subunit from Leptospira interrogans serogroup Icterohaemorrhagiae serovar copenhageni (strain Fiocruz L1-130).